The primary structure comprises 90 residues: Small ribosomal subunit protein uS15 (90 aa).

The protein belongs to the universal ribosomal protein uS15 family. Part of the 30S ribosomal subunit. Forms a bridge to the 50S subunit in the 70S ribosome, contacting the 23S rRNA.

In terms of biological role, one of the primary rRNA binding proteins, it binds directly to 16S rRNA where it helps nucleate assembly of the platform of the 30S subunit by binding and bridging several RNA helices of the 16S rRNA. Its function is as follows. Forms an intersubunit bridge (bridge B4) with the 23S rRNA of the 50S subunit in the ribosome. The protein is Small ribosomal subunit protein uS15 of Wolbachia sp. subsp. Brugia malayi (strain TRS).